The chain runs to 91 residues: Small ribosomal subunit protein bS18 (91 aa).

The protein belongs to the bacterial ribosomal protein bS18 family. In terms of assembly, part of the 30S ribosomal subunit. Forms a tight heterodimer with protein bS6.

In terms of biological role, binds as a heterodimer with protein bS6 to the central domain of the 16S rRNA, where it helps stabilize the platform of the 30S subunit. The sequence is that of Small ribosomal subunit protein bS18 from Thiobacillus denitrificans (strain ATCC 25259 / T1).